The primary structure comprises 636 residues: 1-deoxy-D-xylulose-5-phosphate synthase (636 aa).

Residues His74 and 115 to 117 (GHA) each bind thiamine diphosphate. Asp146 is a Mg(2+) binding site. Thiamine diphosphate is bound by residues 147–148 (GA), Asn175, Tyr285, and Glu368. Asn175 contributes to the Mg(2+) binding site.

It belongs to the transketolase family. DXPS subfamily. As to quaternary structure, homodimer. Mg(2+) is required as a cofactor. Requires thiamine diphosphate as cofactor.

It carries out the reaction D-glyceraldehyde 3-phosphate + pyruvate + H(+) = 1-deoxy-D-xylulose 5-phosphate + CO2. It functions in the pathway metabolic intermediate biosynthesis; 1-deoxy-D-xylulose 5-phosphate biosynthesis; 1-deoxy-D-xylulose 5-phosphate from D-glyceraldehyde 3-phosphate and pyruvate: step 1/1. Its function is as follows. Catalyzes the acyloin condensation reaction between C atoms 2 and 3 of pyruvate and glyceraldehyde 3-phosphate to yield 1-deoxy-D-xylulose-5-phosphate (DXP). This chain is 1-deoxy-D-xylulose-5-phosphate synthase, found in Anaeromyxobacter dehalogenans (strain 2CP-C).